The following is a 300-amino-acid chain: Lysenin-related protein 1 (300 aa).

An N-terminal cap domain region spans residues 12–35 (EEIEVDVVSVWKEGYAYENRGNSS). Positions 36–109 (VQQKITMTKG…SQVIEHTVTI (74 aa)) are beta-hairpin domain. The tract at residues 110-158 (PPNKKFTRWKLNADVGGTGIEYMYLIDEVTAIGADLTIPEVNKSRAKIL) is N-terminal cap domain. Residues 159-299 (VGRQIHLGET…EDKWILEVVN (141 aa)) form a C-terminal receptor-binding domain region. Residues lysine 187, serine 229, tyrosine 235, and tyrosine 284 each coordinate an N-(acyl)-sphingosylphosphocholine. Cysteine 274 and cysteine 285 form a disulfide bridge.

Belongs to the lysenin family. Binds to sphingomyelin as a monomer by using its C-terminal domain. Forms a nonamer when sphingomyelin/LRP-1 ratio is lower than ca 500. Oligomerization, but not binding, is influenced by the fluidity of sphingomyelin. As to expression, expressed by coelomocytes.

It localises to the secreted. The protein resides in the target cell membrane. Pore-forming toxin that specifically binds sphingomyelin in the plasma membrane of various cells. Has hemolytic activity. Binding and hemolytic activities of this toxin are 10 times less than those of lysenin and lysenin-related protein 2. This Eisenia fetida (Red wiggler worm) protein is Lysenin-related protein 1.